The primary structure comprises 274 residues: Large ribosomal subunit protein uL2 (274 aa).

The interval Val-223 to Thr-264 is disordered.

The protein belongs to the universal ribosomal protein uL2 family. As to quaternary structure, part of the 50S ribosomal subunit. Forms a bridge to the 30S subunit in the 70S ribosome.

One of the primary rRNA binding proteins. Required for association of the 30S and 50S subunits to form the 70S ribosome, for tRNA binding and peptide bond formation. It has been suggested to have peptidyltransferase activity; this is somewhat controversial. Makes several contacts with the 16S rRNA in the 70S ribosome. In Shewanella denitrificans (strain OS217 / ATCC BAA-1090 / DSM 15013), this protein is Large ribosomal subunit protein uL2.